Reading from the N-terminus, the 454-residue chain is Bifunctional protein GlmU (454 aa).

The segment at 1–227 (MTQLSVVILA…FMEVEGANNR (227 aa)) is pyrophosphorylase. UDP-N-acetyl-alpha-D-glucosamine-binding positions include 9-12 (LAAG), Lys23, Gln74, 79-80 (GT), 101-103 (YGD), Gly138, Glu152, Asn167, and Asn225. Asp103 is a Mg(2+) binding site. Asn225 lines the Mg(2+) pocket. Residues 228 to 248 (LQLAALERFYQKTQAEKLLLA) are linker. Residues 249–454 (GVRLIDPARF…QGWQRPTKKK (206 aa)) form an N-acetyltransferase region. Residues Arg331 and Lys349 each coordinate UDP-N-acetyl-alpha-D-glucosamine. Catalysis depends on His361, which acts as the Proton acceptor. UDP-N-acetyl-alpha-D-glucosamine-binding residues include Tyr364 and Asn375. Acetyl-CoA contacts are provided by residues Ala378, 384-385 (NY), Ser403, Ala421, and Arg438.

This sequence in the N-terminal section; belongs to the N-acetylglucosamine-1-phosphate uridyltransferase family. It in the C-terminal section; belongs to the transferase hexapeptide repeat family. As to quaternary structure, homotrimer. Requires Mg(2+) as cofactor.

The protein resides in the cytoplasm. The catalysed reaction is alpha-D-glucosamine 1-phosphate + acetyl-CoA = N-acetyl-alpha-D-glucosamine 1-phosphate + CoA + H(+). The enzyme catalyses N-acetyl-alpha-D-glucosamine 1-phosphate + UTP + H(+) = UDP-N-acetyl-alpha-D-glucosamine + diphosphate. It participates in nucleotide-sugar biosynthesis; UDP-N-acetyl-alpha-D-glucosamine biosynthesis; N-acetyl-alpha-D-glucosamine 1-phosphate from alpha-D-glucosamine 6-phosphate (route II): step 2/2. It functions in the pathway nucleotide-sugar biosynthesis; UDP-N-acetyl-alpha-D-glucosamine biosynthesis; UDP-N-acetyl-alpha-D-glucosamine from N-acetyl-alpha-D-glucosamine 1-phosphate: step 1/1. Its pathway is bacterial outer membrane biogenesis; LPS lipid A biosynthesis. Functionally, catalyzes the last two sequential reactions in the de novo biosynthetic pathway for UDP-N-acetylglucosamine (UDP-GlcNAc). The C-terminal domain catalyzes the transfer of acetyl group from acetyl coenzyme A to glucosamine-1-phosphate (GlcN-1-P) to produce N-acetylglucosamine-1-phosphate (GlcNAc-1-P), which is converted into UDP-GlcNAc by the transfer of uridine 5-monophosphate (from uridine 5-triphosphate), a reaction catalyzed by the N-terminal domain. This is Bifunctional protein GlmU from Actinobacillus pleuropneumoniae serotype 3 (strain JL03).